The following is a 779-amino-acid chain: Abnormal cell migration protein 10 (779 aa).

The span at 78–97 (NELEADTEEDIAETADDEES) shows a compositional bias: acidic residues. Disordered stretches follow at residues 78–105 (NELE…EKTE), 189–217 (SSSR…PQQP), and 242–302 (AASS…NAEE). Residues 189 to 200 (SSSRENVKSIST) are compositionally biased toward polar residues. Over residues 242–254 (AASSCSSPDGDSA) the composition is skewed to low complexity. A compositionally biased stretch (polar residues) spans 256 to 293 (GDSSSTESSNNRCRNSAFSSNDSCRDSLNTPSPTQVSP). The Ras-associating domain occupies 317–407 (EAKVTKIFVK…NKLYFMRRPD (91 aa)). The PH domain occupies 456 to 566 (PPEMEGFLYL…WLVALRIAKN (111 aa)). 2 stretches are compositionally biased toward polar residues: residues 645–660 (SFSV…SRTS) and 688–698 (RASTSSPTIPQ). Residues 645-763 (SFSVNSCQQS…SPMAPAKNDL (119 aa)) are disordered. Pro residues predominate over residues 708-729 (PAPPPVASVMRMPPPVTPPKPC).

It belongs to the MRL family. In terms of assembly, may interact (via Ras-associating and PH domains) with ced-10 (GTP-bound form).

Its subcellular location is the perikaryon. Functionally, required cell non-autonomously for proper development of the excretory canals and for the long-range anterior-posterior migrations of embryonic neurons CAN, ALM and HSN. Plays a role, probably downstream of ced-10/rac1, in orientating axonal growth of HSN and AVM neurons in response to guidance cues such as slt-1. May regulate growth cone polarization by promoting asymmetric F-actin assembly. May be involved in signal transduction during cell migration. This is Abnormal cell migration protein 10 from Caenorhabditis elegans.